Here is a 135-residue protein sequence, read N- to C-terminus: QAKVEMLDNLLDIEVAYSLLKGGAEDNKKDPIDINYEKLKTKIEVVDKTTKEAEIILQYVKNTHAATHNTYTLVVEEIFKIVREGEYQKYRPFQDLPNRQLLWHGSRATNYAGILSQGLRIAPPEAPVTGYMFGK.

The region spanning 1 to 21 (QAKVEMLDNLLDIEVAYSLLK) is the PARP alpha-helical domain. In terms of domain architecture, PARP catalytic spans 30 to 135 (DPIDINYEKL…APVTGYMFGK (106 aa)). NAD(+) is bound by residues 104 to 106 (HGS), Gly-113, and Arg-120. Residue Lys-135 is part of the active site.

The protein belongs to the ARTD/PARP family. In terms of assembly, homodimer; PARP-type zinc-fingers from separate parp1 molecules form a dimer module that specifically recognizes DNA strand breaks. Poly-ADP-ribosylated on serine, glutamate and aspartate residues by autocatalysis. Auto-ADP-ribosylation on serine takes place following interaction with HPF1. Auto poly-ADP-ribosylation on serine residues promotes its dissociation from chromatin.

Its subcellular location is the chromosome. It localises to the nucleus. The protein resides in the nucleolus. The protein localises to the cytoplasm. It is found in the cytosol. The enzyme catalyses NAD(+) + (ADP-D-ribosyl)n-acceptor = nicotinamide + (ADP-D-ribosyl)n+1-acceptor + H(+).. It carries out the reaction L-seryl-[protein] + NAD(+) = O-(ADP-D-ribosyl)-L-seryl-[protein] + nicotinamide + H(+). The catalysed reaction is L-aspartyl-[protein] + NAD(+) = 4-O-(ADP-D-ribosyl)-L-aspartyl-[protein] + nicotinamide. It catalyses the reaction L-glutamyl-[protein] + NAD(+) = 5-O-(ADP-D-ribosyl)-L-glutamyl-[protein] + nicotinamide. The enzyme catalyses L-tyrosyl-[protein] + NAD(+) = O-(ADP-D-ribosyl)-L-tyrosyl-[protein] + nicotinamide + H(+). It carries out the reaction L-histidyl-[protein] + NAD(+) = N(tele)-(ADP-D-ribosyl)-L-histidyl-[protein] + nicotinamide + H(+). With respect to regulation, ADP-ribosyltransferase activity is regulated via an allosteric activation mechanism. In absence of activation signal, parp1 is autoinhibited by the PARP alpha-helical domain (also named HD region), which prevents effective NAD(+)-binding. Activity is highly stimulated by signals, such as DNA strand breaks. Binding to damaged DNA unfolds the PARP alpha-helical domain, relieving autoinhibition. Poly-ADP-ribosyltransferase activity is tightly regulated and parp1 is removed from damaged chromatin following initial poly-ADP-ribosylation of chromatin to avoid prolonged residence (trapping) that has cytotoxic consequences. A number of factors or post-translational modifications (auto-poly-ADP-ribosylation) promote parp1 removal from chromatin. Poly-ADP-ribosyltransferase that mediates poly-ADP-ribosylation of proteins and plays a key role in DNA repair. Mediates glutamate, aspartate, serine, histidine or tyrosine ADP-ribosylation of proteins: the ADP-D-ribosyl group of NAD(+) is transferred to the acceptor carboxyl group of target residues and further ADP-ribosyl groups are transferred to the 2'-position of the terminal adenosine moiety, building up a polymer with an average chain length of 20-30 units. Serine ADP-ribosylation of proteins constitutes the primary form of ADP-ribosylation of proteins in response to DNA damage. Specificity for the different amino acids is conferred by interacting factors, such as hpf1 and nmnat1. Following interaction with hpf1, catalyzes serine ADP-ribosylation of target proteins; hpf1 confers serine specificity by completing the parp1 active site. Also catalyzes tyrosine ADP-ribosylation of target proteins following interaction with hpf1. Following interaction with nmnat1, catalyzes glutamate and aspartate ADP-ribosylation of target proteins; nmnat1 confers glutamate and aspartate specificity. Parp1 initiates the repair of DNA breaks: recognizes and binds DNA breaks within chromatin and recruits hpf1, licensing serine ADP-ribosylation of target proteins, such as histones (H2BS6ADPr and H3S10ADPr), thereby promoting decompaction of chromatin and the recruitment of repair factors leading to the reparation of DNA strand breaks. In addition to base excision repair (BER) pathway, also involved in double-strand breaks (DSBs) repair. Mediates the poly-ADP-ribosylation of a number of proteins. In addition to proteins, also able to ADP-ribosylate DNA: catalyzes ADP-ribosylation of DNA strand break termini containing terminal phosphates and a 2'-OH group in single- and double-stranded DNA, respectively. Parp1-mediated DNA repair in neurons plays a role in sleep: senses DNA damage in neurons and promotes sleep, facilitating efficient DNA repair. In addition to DNA repair, also involved in other processes, such as transcription regulation, programmed cell death, membrane repair, adipogenesis and innate immunity. Acts as a repressor of transcription: binds to nucleosomes and modulates chromatin structure in a manner similar to histone H1, thereby altering RNA polymerase II. Acts both as a positive and negative regulator of transcription elongation, depending on the context. Poly-ADP-ribose chains generated by parp1 also play a role in poly-ADP-ribose-dependent cell death, a process named parthanatos. Also acts as a negative regulator of the cGAS-STING pathway by mediating poly-ADP-ribosylation and inactivation of cgas. Acts as a negative regulator of adipogenesis by catalyzing poly ADP-ribosylation of histone H2B on 'Glu-35' (H2BE35ADPr). The protein is Poly [ADP-ribose] polymerase 1 (parp1) of Oncorhynchus masou (Cherry salmon).